A 243-amino-acid chain; its full sequence is Coproheme decarboxylase (243 aa).

Residue Y145 is part of the active site. Residue H168 coordinates Fe-coproporphyrin III.

This sequence belongs to the ChdC family. Type 2 subfamily. It depends on Fe-coproporphyrin III as a cofactor.

The enzyme catalyses Fe-coproporphyrin III + 2 H2O2 + 2 H(+) = heme b + 2 CO2 + 4 H2O. It catalyses the reaction Fe-coproporphyrin III + H2O2 + H(+) = harderoheme III + CO2 + 2 H2O. The catalysed reaction is harderoheme III + H2O2 + H(+) = heme b + CO2 + 2 H2O. The protein operates within porphyrin-containing compound metabolism; protoheme biosynthesis. Its function is as follows. Involved in coproporphyrin-dependent heme b biosynthesis. Catalyzes the decarboxylation of Fe-coproporphyrin III (coproheme) to heme b (protoheme IX), the last step of the pathway. The reaction occurs in a stepwise manner with a three-propionate intermediate. This is Coproheme decarboxylase from Streptomyces coelicolor (strain ATCC BAA-471 / A3(2) / M145).